The following is a 620-amino-acid chain: MKKQVKNIKKQKAQNQTKNIKKQLKEEVNTGLIDGIFVYTEPLSVIEFATKINKPLTAILKHYFNQGLLLNQNTLLTEEQMGELCLEFGFDFKKETTVTKENILQTLLETVDDEKHLKERPPIVTIMGHVDHGKTTLLDSIKNSNVVASEAGGITQAIGAYQITTNHNKKITFIDTPGHEAFTEMRSRGANVTDIVVLIVAADDGVMPQTEEAIDHAKLANVPIIVFINKIDKPEADPNRVKTELMKYGLVAEEFGGDIPFIEGSAIKKINLDKLQDTIILISELENLKANPDKFASGVVLEAHLDKAKGPVASVLVQQGTLEIKDIMIAGTTFGSIKHIEDEFKHKVLKAEPSKPVVVYGLNQVPKAGDKFVVINDEKMAREISEAQLKKQQEEERRTKQAFTLDAIKQHIDEGELKNITLIIKADTQGSVEALKNSLSKINISGVKINIIRASVGAISLSDISLASTVRDGLVIVYGFNVRPDAIVRKKAEEDHIEIKLHNIIYKVIEELEDAAKGILDPEVKELVLGQAQVRALFRHSAIGTIGGFYVLDGIIPRNAKIRVIRNGVVVYDGEINSLQHQKQDAKEIKAGFEGGLTIKNFNDIKEEDIFEAYKIEQIK.

The 170-residue stretch at 119–288 (ERPPIVTIMG…IILISELENL (170 aa)) folds into the tr-type G domain. Positions 128–135 (GHVDHGKT) are G1. 128-135 (GHVDHGKT) contributes to the GTP binding site. The segment at 153-157 (GITQA) is G2. Residues 175–178 (DTPG) form a G3 region. Residues 175-179 (DTPGH) and 229-232 (NKID) each bind GTP. Positions 229-232 (NKID) are G4. The G5 stretch occupies residues 265–267 (SAI).

The protein belongs to the TRAFAC class translation factor GTPase superfamily. Classic translation factor GTPase family. IF-2 subfamily.

It localises to the cytoplasm. In terms of biological role, one of the essential components for the initiation of protein synthesis. Protects formylmethionyl-tRNA from spontaneous hydrolysis and promotes its binding to the 30S ribosomal subunits. Also involved in the hydrolysis of GTP during the formation of the 70S ribosomal complex. This is Translation initiation factor IF-2 from Mycoplasma mycoides subsp. mycoides SC (strain CCUG 32753 / NCTC 10114 / PG1).